Consider the following 156-residue polypeptide: Deoxyuridine 5'-triphosphate nucleotidohydrolase (156 aa).

Substrate is bound by residues Arg74–Gly76, Asn87, Thr91–Asp93, and Lys101.

It belongs to the dUTPase family. It depends on Mg(2+) as a cofactor.

The enzyme catalyses dUTP + H2O = dUMP + diphosphate + H(+). The protein operates within pyrimidine metabolism; dUMP biosynthesis; dUMP from dCTP (dUTP route): step 2/2. Its function is as follows. This enzyme is involved in nucleotide metabolism: it produces dUMP, the immediate precursor of thymidine nucleotides and it decreases the intracellular concentration of dUTP so that uracil cannot be incorporated into DNA. This is Deoxyuridine 5'-triphosphate nucleotidohydrolase from Wolbachia sp. subsp. Brugia malayi (strain TRS).